Consider the following 906-residue polypeptide: ATP-dependent DNA helicase PIF1 (906 aa).

Disordered regions lie at residues 77-146 (DSEI…SSTF) and 229-297 (LEGS…PFKV). A compositionally biased stretch (basic and acidic residues) spans 78-87 (SEIKESDDLS). The span at 88-119 (KGQSHVYNGSPVTKNSILQIEKQQIQKSPRPT) shows a compositional bias: polar residues. The span at 120–132 (ETNKRMQIRKDPD) shows a compositional bias: basic and acidic residues. Polar residues predominate over residues 234–261 (NKVQADNASPFRITSSFSSPSQIQNQGV). A compositionally biased stretch (low complexity) spans 273–291 (QNVSSASQSSSPPMTVSQV). ATP is bound at residue 390 to 397 (GSAGTGKS). The DNA-binding element occupies 840–859 (QAYVALSRAVSRAGLQVLNF).

This sequence belongs to the helicase family. PIF1 subfamily. In terms of assembly, monomer. Interacts with telomerase. Mg(2+) serves as cofactor.

Its subcellular location is the nucleus. It is found in the mitochondrion. The enzyme catalyses Couples ATP hydrolysis with the unwinding of duplex DNA at the replication fork by translocating in the 5'-3' direction. This creates two antiparallel DNA single strands (ssDNA). The leading ssDNA polymer is the template for DNA polymerase III holoenzyme which synthesizes a continuous strand.. It carries out the reaction ATP + H2O = ADP + phosphate + H(+). DNA-dependent ATPase and 5'-3' DNA helicase required for the maintenance of both mitochondrial and nuclear genome stability. Efficiently unwinds G-quadruplex (G4) DNA structures and forked RNA-DNA hybrids. Resolves G4 structures, preventing replication pausing and double-strand breaks (DSBs) at G4 motifs. Involved in the maintenance of telomeric DNA. Inhibits telomere elongation, de novo telomere formation and telomere addition to DSBs via catalytic inhibition of telomerase. Reduces the processivity of telomerase by displacing active telomerase from DNA ends. Releases telomerase by unwinding the short telomerase RNA/telomeric DNA hybrid that is the intermediate in the telomerase reaction. Involved in the maintenance of ribosomal (rDNA). Required for efficient fork arrest at the replication fork barrier within rDNA. Involved in the maintenance of mitochondrial (mtDNA). Required to maintain mtDNA under conditions that introduce dsDNA breaks in mtDNA, either preventing or repairing dsDNA breaks. May inhibit replication progression to allow time for repair. May have a general role in chromosomal replication by affecting Okazaki fragment maturation. May have a role in conjunction with DNA2 helicase/nuclease in 5'-flap extension during Okazaki fragment processing. The protein is ATP-dependent DNA helicase PIF1 of Candida albicans (strain SC5314 / ATCC MYA-2876) (Yeast).